The chain runs to 757 residues: Probable inorganic carbon transporter subunit DabA (757 aa).

Zn(2+) is bound by residues Cys321, Asp323, His475, and Cys490.

This sequence belongs to the inorganic carbon transporter (TC 9.A.2) DabA family. Forms a complex with DabB. It depends on Zn(2+) as a cofactor.

The protein localises to the cell inner membrane. Functionally, part of an energy-coupled inorganic carbon pump. This is Probable inorganic carbon transporter subunit DabA from Idiomarina loihiensis (strain ATCC BAA-735 / DSM 15497 / L2-TR).